Consider the following 250-residue polypeptide: Thermostable monoacylglycerol lipase (250 aa).

Phenylalanine 29 provides a ligand contact to substrate. Catalysis depends on serine 97, which acts as the Nucleophile. Methionine 98 is a substrate binding site. Catalysis depends on charge relay system residues aspartate 196 and histidine 226.

Belongs to the lipase/esterase LIP3/BchO family. Monomer.

It carries out the reaction Hydrolyzes glycerol monoesters of long-chain fatty acids.. Its activity is regulated as follows. Not inhibited by cholate, but slightly inhibited by triton X-100 and deoxycholate. Completely inhibited by PMSF (phenylmethylsulfonyl fluoride) at a concentration of 200 uM. Hydrolyzes monoacylglycerols, with the highest activity occurring with 1-monolauroylglycerol. This Bacillus sp. (strain H-257) protein is Thermostable monoacylglycerol lipase.